A 300-amino-acid chain; its full sequence is Non-secreted LysM effector LysM16 (300 aa).

Residues 176–222 (EWHTVFSGDTCQLIEAEYGITLEKFIALNTYVNSTCGNIWPDYAYCV) enclose the LysM domain.

It belongs to the secreted LysM effector family.

In terms of biological role, non-secreted LysM effector that might be involved in manipulation of host defenses for successful infection. The chain is Non-secreted LysM effector LysM16 from Penicillium expansum (Blue mold rot fungus).